A 399-amino-acid polypeptide reads, in one-letter code: Elongation factor Tu (399 aa).

Residues 10-209 enclose the tr-type G domain; it reads KPHVNIGTIG…AVDDYIPTPV (200 aa). Residues 19–26 are G1; the sequence is GHVDHGKT. 19–26 is a binding site for GTP; that stretch reads GHVDHGKT. Thr26 is a binding site for Mg(2+). The segment at 62 to 66 is G2; it reads GITIN. Residues 83–86 form a G3 region; it reads DCPG. Residues 83 to 87 and 138 to 141 contribute to the GTP site; these read DCPGH and NKCD. The interval 138–141 is G4; it reads NKCD. Residues 175–177 are G5; sequence SAY.

It belongs to the TRAFAC class translation factor GTPase superfamily. Classic translation factor GTPase family. EF-Tu/EF-1A subfamily. In terms of assembly, monomer.

It is found in the cytoplasm. It catalyses the reaction GTP + H2O = GDP + phosphate + H(+). In terms of biological role, GTP hydrolase that promotes the GTP-dependent binding of aminoacyl-tRNA to the A-site of ribosomes during protein biosynthesis. The sequence is that of Elongation factor Tu from Bifidobacterium longum subsp. infantis (strain ATCC 15697 / DSM 20088 / JCM 1222 / NCTC 11817 / S12).